Here is a 49-residue protein sequence, read N- to C-terminus: Large ribosomal subunit protein bL33 (49 aa).

The protein belongs to the bacterial ribosomal protein bL33 family.

The sequence is that of Large ribosomal subunit protein bL33 from Syntrophobacter fumaroxidans (strain DSM 10017 / MPOB).